The following is a 507-amino-acid chain: MVTLKADEISNIIRERIEQYNREVKIVNTGTVLQVGDGIARIYGLDEVMAGELVEFEEGTIGIALNLESNNVGVVLMGDGLMIQEGSSVKATGKIAQIPVSEAYLGRVINALANPIDGRGKISASESRLIESPAPGIISRRSVYEPLQTGLIAIDSMIPIGRGQRELIIGDRQTGKTAVATDTILNQEGQNVICVYVAIGQKASSVAQVVTSLQERGAMEYTIVVAETADSPATLQYLAPYTGAALAEYFMYREQHTLIIYDDLSKQAQAYRQMSLLLRRPPGREAYPGDVFYLHSRLLERAAKLSSQLGEGSMTALPIVETQSGDVSAYIPTNVISITDGQIFLSADLFNAGIRPAINVGISVSRVGSAAQIKAMKQVAGKLKLELAQFAELEAFAQFSSDLDKATQNQLARGQRLRELLKQSQSAPLTVEEQIMTIYTGTNGYLDGLEIGQVRKFLVQLRTYLKTNKPQFQEIISSTKTLTNEAESVLKEGIQEQLERFLLQEKL.

An ATP-binding site is contributed by 170–177 (GDRQTGKT). A Phosphothreonine modification is found at Thr-257.

It belongs to the ATPase alpha/beta chains family. As to quaternary structure, F-type ATPases have 2 components, CF(1) - the catalytic core - and CF(0) - the membrane proton channel. CF(1) has five subunits: alpha(3), beta(3), gamma(1), delta(1), epsilon(1). CF(0) has four main subunits: a, b, b' and c.

Its subcellular location is the plastid. It localises to the chloroplast thylakoid membrane. It catalyses the reaction ATP + H2O + 4 H(+)(in) = ADP + phosphate + 5 H(+)(out). Produces ATP from ADP in the presence of a proton gradient across the membrane. The alpha chain is a regulatory subunit. This is ATP synthase subunit alpha, chloroplastic from Aethionema cordifolium (Lebanon stonecress).